Here is a 244-residue protein sequence, read N- to C-terminus: Large ribosomal subunit protein uL2 (244 aa).

Composition is skewed to basic residues over residues 1 to 12 (MGKRPLVRRRGR) and 234 to 244 (KTGRARIKERK). 2 disordered regions span residues 1 to 30 (MGKR…TKAN) and 203 to 244 (HGGG…KERK).

This sequence belongs to the universal ribosomal protein uL2 family. Part of the 50S ribosomal subunit. Forms a bridge to the 30S subunit in the 70S ribosome.

Its function is as follows. One of the primary rRNA binding proteins. Required for association of the 30S and 50S subunits to form the 70S ribosome, for tRNA binding and peptide bond formation. It has been suggested to have peptidyltransferase activity; this is somewhat controversial. Makes several contacts with the 16S rRNA in the 70S ribosome. This Nitrosopumilus maritimus (strain SCM1) protein is Large ribosomal subunit protein uL2.